The following is a 258-amino-acid chain: Thiazole synthase (258 aa).

Residue Lys100 is the Schiff-base intermediate with DXP of the active site. 1-deoxy-D-xylulose 5-phosphate contacts are provided by residues Gly161, 187–188 (AG), and 209–210 (NT).

Belongs to the ThiG family. Homotetramer. Forms heterodimers with either ThiH or ThiS.

It localises to the cytoplasm. The catalysed reaction is [ThiS sulfur-carrier protein]-C-terminal-Gly-aminoethanethioate + 2-iminoacetate + 1-deoxy-D-xylulose 5-phosphate = [ThiS sulfur-carrier protein]-C-terminal Gly-Gly + 2-[(2R,5Z)-2-carboxy-4-methylthiazol-5(2H)-ylidene]ethyl phosphate + 2 H2O + H(+). It functions in the pathway cofactor biosynthesis; thiamine diphosphate biosynthesis. Functionally, catalyzes the rearrangement of 1-deoxy-D-xylulose 5-phosphate (DXP) to produce the thiazole phosphate moiety of thiamine. Sulfur is provided by the thiocarboxylate moiety of the carrier protein ThiS. In vitro, sulfur can be provided by H(2)S. The sequence is that of Thiazole synthase from Campylobacter jejuni subsp. doylei (strain ATCC BAA-1458 / RM4099 / 269.97).